The sequence spans 326 residues: Putative replication protein B (326 aa).

This sequence belongs to the ParB family.

This chain is Putative replication protein B, found in Sinorhizobium fredii (strain NBRC 101917 / NGR234).